Consider the following 416-residue polypeptide: MSDENQHGFYRTSFEYASISWRRMIPNVADTIVVTLIGATALQVASNVLITILTLNIAFLNFCSLICMHNLKRGAKADVFAAIVRAACMMIGVYLALIAVSVATLEGAPRTQTIAFIALSALRPFVAGWNAYCAEVFFAQGKRQIVRSVITRSSLIYAGVNLLFVGLSHFAGTQNSIISLLIGVYLALFHNALAYARILPTEWRFSRQDLKDVFSLRKLDLVGIGAGLSASFINMLEMGFLALVGWVVAAKFPQIAVFYFPFFTLVELTSGLAIGLGRSVTERLITPRPFPRLHVLIAVYSTYSLLCFLIYVGLIGVSNRDIFALPLSLAGLALLFLICDGLQLVVRGYTLAKADGGKLTHLSAIAYLASGVILALAAVLGSVQALAIALVLGPLFLAISIPAVQSRTALNALPNR.

Helical transmembrane passes span 24–44 (MIPN…ALQV), 48–68 (VLIT…LICM), 79–99 (VFAA…ALIA), 114–134 (IAFI…AYCA), 153–173 (SSLI…FAGT), 176–196 (SIIS…LAYA), 230–250 (ASFI…VVAA), 255–275 (IAVF…LAIG), 295–315 (VLIA…VGLI), 322–342 (IFAL…CDGL), and 372–392 (VILA…ALVL).

Its subcellular location is the cell membrane. The actions of the proteins TfxB, TfxD and TfxF are implicated in the processing of the inactive trifolitoxin (TfxA) precursor into the active peptide. The chain is Trifolitoxin-processing protein TfxD (tfxD) from Rhizobium leguminosarum bv. trifolii.